A 649-amino-acid chain; its full sequence is ABC transporter G family member 5 (649 aa).

One can recognise an ABC transporter domain in the interval 42–284 (VKTEEESLKL…LRSNGLHPPL (243 aa)). 80-87 (GPSGAGKS) contributes to the ATP binding site. Residues 308-336 (SRRAAHVLTPQTTLQEKRSEDSQGESKSG) are disordered. The ABC transmembrane type-2 domain occupies 371–581 (EETMILTHRF…PFEGFLINEF (211 aa)). The next 6 helical transmembrane spans lie at 390–410 (LFAC…LIFH), 425–445 (LFAF…PIFL), 474–494 (LPFL…LVGL), 506–526 (LLIW…SALV), 529–549 (FIVG…FSGY), and 617–637 (VVIM…ILRC).

This sequence belongs to the ABC transporter superfamily. ABCG family. Eye pigment precursor importer (TC 3.A.1.204) subfamily.

The protein localises to the membrane. This Arabidopsis thaliana (Mouse-ear cress) protein is ABC transporter G family member 5 (ABCG5).